A 167-amino-acid chain; its full sequence is MNNKHPENKAKSTTTPKTIALNKRARHEYHLIERHEAGLELQGWEVKAIRAGRANLADGYAYVRDGEIFLIGAQITPLIQASTHVVANDRRTRKLLLHRRQIDTLIGRVQREGFTLVPTAMYWSKNRVKMEIALAKGKQAHDKRHAEKEREWQRDKQRIMRAHNRNA.

Positions 139-167 are disordered; that stretch reads QAHDKRHAEKEREWQRDKQRIMRAHNRNA. Basic and acidic residues predominate over residues 144–158; that stretch reads RHAEKEREWQRDKQR.

It belongs to the SmpB family.

It is found in the cytoplasm. Required for rescue of stalled ribosomes mediated by trans-translation. Binds to transfer-messenger RNA (tmRNA), required for stable association of tmRNA with ribosomes. tmRNA and SmpB together mimic tRNA shape, replacing the anticodon stem-loop with SmpB. tmRNA is encoded by the ssrA gene; the 2 termini fold to resemble tRNA(Ala) and it encodes a 'tag peptide', a short internal open reading frame. During trans-translation Ala-aminoacylated tmRNA acts like a tRNA, entering the A-site of stalled ribosomes, displacing the stalled mRNA. The ribosome then switches to translate the ORF on the tmRNA; the nascent peptide is terminated with the 'tag peptide' encoded by the tmRNA and targeted for degradation. The ribosome is freed to recommence translation, which seems to be the essential function of trans-translation. The protein is SsrA-binding protein of Xylella fastidiosa (strain 9a5c).